Reading from the N-terminus, the 258-residue chain is Imidazole glycerol phosphate synthase subunit HisF (258 aa).

Catalysis depends on residues Asp11 and Asp130.

The protein belongs to the HisA/HisF family. In terms of assembly, heterodimer of HisH and HisF.

It is found in the cytoplasm. It carries out the reaction 5-[(5-phospho-1-deoxy-D-ribulos-1-ylimino)methylamino]-1-(5-phospho-beta-D-ribosyl)imidazole-4-carboxamide + L-glutamine = D-erythro-1-(imidazol-4-yl)glycerol 3-phosphate + 5-amino-1-(5-phospho-beta-D-ribosyl)imidazole-4-carboxamide + L-glutamate + H(+). It functions in the pathway amino-acid biosynthesis; L-histidine biosynthesis; L-histidine from 5-phospho-alpha-D-ribose 1-diphosphate: step 5/9. Its function is as follows. IGPS catalyzes the conversion of PRFAR and glutamine to IGP, AICAR and glutamate. The HisF subunit catalyzes the cyclization activity that produces IGP and AICAR from PRFAR using the ammonia provided by the HisH subunit. The protein is Imidazole glycerol phosphate synthase subunit HisF of Bradyrhizobium sp. (strain ORS 278).